A 73-amino-acid chain; its full sequence is Cell division protein ZapB (73 aa).

Positions 3–66 form a coiled coil; that stretch reads LELLSQLETK…SWSDKVNGLV (64 aa).

The protein belongs to the ZapB family. As to quaternary structure, homodimer. The ends of the coiled-coil dimer bind to each other, forming polymers. Interacts with FtsZ.

It is found in the cytoplasm. In terms of biological role, non-essential, abundant cell division factor that is required for proper Z-ring formation. It is recruited early to the divisome by direct interaction with FtsZ, stimulating Z-ring assembly and thereby promoting cell division earlier in the cell cycle. Its recruitment to the Z-ring requires functional FtsA or ZipA. The chain is Cell division protein ZapB from Shewanella frigidimarina (strain NCIMB 400).